Reading from the N-terminus, the 195-residue chain is Shikimate kinase (195 aa).

31–36 contacts ATP; sequence GAGKSC. A Mg(2+)-binding site is contributed by serine 35. Residues aspartate 53, arginine 77, and glycine 99 each contribute to the substrate site. An ATP-binding site is contributed by arginine 137. Residue arginine 156 participates in substrate binding.

This sequence belongs to the shikimate kinase family. In terms of assembly, monomer. The cofactor is Mg(2+).

The protein localises to the cytoplasm. It carries out the reaction shikimate + ATP = 3-phosphoshikimate + ADP + H(+). It functions in the pathway metabolic intermediate biosynthesis; chorismate biosynthesis; chorismate from D-erythrose 4-phosphate and phosphoenolpyruvate: step 5/7. Its function is as follows. Catalyzes the specific phosphorylation of the 3-hydroxyl group of shikimic acid using ATP as a cosubstrate. The protein is Shikimate kinase of Paramagnetospirillum magneticum (strain ATCC 700264 / AMB-1) (Magnetospirillum magneticum).